The chain runs to 163 residues: Nucleotide-binding protein BA_1166 (163 aa).

It belongs to the YajQ family.

In terms of biological role, nucleotide-binding protein. In Bacillus anthracis, this protein is Nucleotide-binding protein BA_1166.